The chain runs to 502 residues: Arabinose import ATP-binding protein AraG (502 aa).

ABC transporter domains lie at 6–241 (LEFD…MVGR) and 252–497 (REVG…MVES). An ATP-binding site is contributed by 38-45 (GENGAGKS).

The protein belongs to the ABC transporter superfamily. Arabinose importer (TC 3.A.1.2.2) family. The complex is composed of two ATP-binding proteins (AraG), two transmembrane proteins (AraH) and a solute-binding protein (AraF).

It localises to the cell inner membrane. The enzyme catalyses L-arabinose(out) + ATP + H2O = L-arabinose(in) + ADP + phosphate + H(+). Functionally, part of the ABC transporter complex AraFGH involved in arabinose import. Responsible for energy coupling to the transport system. The polypeptide is Arabinose import ATP-binding protein AraG (Mannheimia succiniciproducens (strain KCTC 0769BP / MBEL55E)).